The following is a 474-amino-acid chain: MTKKLHIKTWGCQMNEYDSSKMADLLDATHGYQLTDVAEEADVLLLNTCSIREKAQEKVFHQLGRWKLLKEKNPDLIIGVGGCVASQEGEHIRQRAHYVDIIFGPQTLHRLPEMINSVRGDRSPVVDISFPEIEKFDRLPEPRAEGPTAFVSIMEGCNKYCTYCVVPYTRGEEVSRPSDDILFEIAQLAAQGVREVNLLGQNVNAWRGENYDGTTGSFADLLRLVAAIDGIDRIRFTTSHPIEFTDDIIEVYRDTPELVSFLHLPVQSGSDRILNLMGRTHTALEYKAIIRKLRAARPDIQISSDFIVGFPGETTDDFEKTMKLIADVNFDMSYSFIFSARPGTPAADMVDDVPEEEKKQRLYILQERINQQAMAWSRRMLGTTQRILVEGTSRKSIMELSGRTENNRVVNFEGTPDMIGKFVDVEITDVYPNSLRGKVVRTEDEMGLRVAETPESVIARTRKENDLGVGYYQP.

The 118-residue stretch at 3–120 (KKLHIKTWGC…LPEMINSVRG (118 aa)) folds into the MTTase N-terminal domain. Cys12, Cys49, Cys83, Cys157, Cys161, and Cys164 together coordinate [4Fe-4S] cluster. The 233-residue stretch at 143–375 (RAEGPTAFVS…QERINQQAMA (233 aa)) folds into the Radical SAM core domain. Residues 378–441 (RRMLGTTQRI…PNSLRGKVVR (64 aa)) form the TRAM domain.

It belongs to the methylthiotransferase family. MiaB subfamily. As to quaternary structure, monomer. [4Fe-4S] cluster serves as cofactor.

The protein resides in the cytoplasm. It catalyses the reaction N(6)-dimethylallyladenosine(37) in tRNA + (sulfur carrier)-SH + AH2 + 2 S-adenosyl-L-methionine = 2-methylsulfanyl-N(6)-dimethylallyladenosine(37) in tRNA + (sulfur carrier)-H + 5'-deoxyadenosine + L-methionine + A + S-adenosyl-L-homocysteine + 2 H(+). In terms of biological role, catalyzes the methylthiolation of N6-(dimethylallyl)adenosine (i(6)A), leading to the formation of 2-methylthio-N6-(dimethylallyl)adenosine (ms(2)i(6)A) at position 37 in tRNAs that read codons beginning with uridine. The polypeptide is tRNA-2-methylthio-N(6)-dimethylallyladenosine synthase (Escherichia coli (strain UTI89 / UPEC)).